A 99-amino-acid polypeptide reads, in one-letter code: Ubiquitin-related modifier 1 (99 aa).

Gly99 carries the post-translational modification 1-thioglycine. Residue Gly99 forms a Glycyl lysine isopeptide (Gly-Lys) (interchain with K-? in acceptor proteins) linkage.

Belongs to the URM1 family. As to quaternary structure, homodimer; homodimerization may provide an autoprotection to the highly active C-terminal residue before attacking its substrates. Interacts with NCS2 and NCS6. Forms a conjugate with the target protein AHP1. Post-translationally, C-terminal thiocarboxylation occurs in 2 steps, it is first acyl-adenylated (-COAMP) via the hesA/moeB/thiF part of UBA4, then thiocarboxylated (-COSH) via the rhodanese domain of UBA4.

It is found in the cytoplasm. Its subcellular location is the nucleus. It participates in tRNA modification; 5-methoxycarbonylmethyl-2-thiouridine-tRNA biosynthesis. Acts as a sulfur carrier required for 2-thiolation of mcm(5)S(2)U at tRNA wobble positions of cytosolic tRNA(Lys), tRNA(Glu) and tRNA(Gln). Serves as sulfur donor in tRNA 2-thiolation reaction by being thiocarboxylated (-COSH) at its C-terminus by the MOCS3 homolog UBA4. The sulfur is then transferred to tRNA to form 2-thiolation of mcm(5)S(2)U. Prior mcm(5) tRNA modification by the elongator complex is required for 2-thiolation. Also acts as a ubiquitin-like protein (UBL) that is covalently conjugated via an isopeptide bond to lysine residues of target proteins such as AHP1. The thiocarboxylated form serves as substrate for conjugation and oxidative stress specifically induces the formation of UBL-protein conjugates. The chain is Ubiquitin-related modifier 1 from Saccharomyces cerevisiae (strain RM11-1a) (Baker's yeast).